The sequence spans 500 residues: tRNA nucleotidyltransferase cca1 (500 aa).

The tract at residues 122 to 139 is flexible loop; sequence DYTNSNSSNKLVFGTPLE. An ERhxxExxxhh motif motif is present at residues 231 to 241; that stretch reads ERIGVEVDKML.

It belongs to the tRNA nucleotidyltransferase/poly(A) polymerase family.

The catalysed reaction is a tRNA precursor + 2 CTP = a tRNA with a 3' CC end + 2 diphosphate. Its function is as follows. tRNA nucleotidyltransferase involved in the synthesis of the tRNA CCA terminus. In contrast to what is usually observed in eukaryotes for which one enzyme synthesizes the whole tRNA CCA terminus, in S.pombe, cca1 specifically adds two cytidine residues to a tRNA substrate lacking this sequence while cca2 specifically adds the terminal adenosine residue thereby completing the CCA sequence. In Schizosaccharomyces pombe (strain 972 / ATCC 24843) (Fission yeast), this protein is tRNA nucleotidyltransferase cca1.